Here is a 216-residue protein sequence, read N- to C-terminus: Potassium-transporting ATPase KdpC subunit (216 aa).

Residues 12 to 32 (LLGVSLLVFGLLYQGSLMAIG) form a helical membrane-spanning segment. The span at 197–207 (QNETDQNSDMN) shows a compositional bias: polar residues. The interval 197-216 (QNETDQNSDMNASEIANGDH) is disordered.

The protein belongs to the KdpC family. The system is composed of three essential subunits: KdpA, KdpB and KdpC. The complex also contains KdpF, a small non-essential subunit.

Its subcellular location is the cell membrane. Its function is as follows. Part of the high-affinity ATP-driven potassium transport (or Kdp) system, which catalyzes the hydrolysis of ATP coupled with the electrogenic transport of potassium into the cytoplasm. This subunit acts as a catalytic chaperone that increases the ATP-binding affinity of the ATP-hydrolyzing subunit KdpB by the formation of a transient KdpB/KdpC/ATP ternary complex. The Kdp system is essential for growth under K(+) limitation, and for survival under desiccation and salt crystal inclusion. In Halobacterium salinarum (strain ATCC 29341 / DSM 671 / R1), this protein is Potassium-transporting ATPase KdpC subunit.